The sequence spans 311 residues: Arginine/serine-rich protein 1 (311 aa).

The interval 1–125 is disordered; sequence MSTYVNDMWP…RSRSRSRGRS (125 aa). Position 12 is a phosphoserine (Ser-12). Low complexity predominate over residues 20–31; the sequence is STSRSGGSSRLS. A compositionally biased stretch (basic residues) spans 32–123; the sequence is SRSRSRSFSR…RSRSRSRSRG (92 aa). Phosphoserine is present on residues Ser-109 and Ser-111. At Arg-135 the chain carries Omega-N-methylarginine.

It belongs to the RSRP family. In terms of processing, phosphorylated. Phosphorylation at Ser-109 and Ser-111 mediates the interaction with spliceosome proteins.

Its subcellular location is the nucleus. Probably acts as a spliceosomal factor that contributes to spliceosome assembly and regulates the isoform switching of proteins such as PARP6. This is Arginine/serine-rich protein 1 (RSRP1) from Pongo abelii (Sumatran orangutan).